Here is a 151-residue protein sequence, read N- to C-terminus: MFRGANAVSLDAKGRLAMPSRYRDELDSRCNGQLIVTIDAVDPCLCVYPLDEWEQIEAKLRALPSLREENRRLQRLLIGNAVDLELDGSGRFLVPPRLREYAKLDKKAMLVGQLNKFQLWDEDAWNAVSAADLAAIQQPGAMPDELRDLIL.

2 SpoVT-AbrB domains span residues 5-52 (ANAV…PLDE) and 81-124 (AVDL…DEDA).

It belongs to the MraZ family. As to quaternary structure, forms oligomers.

The protein resides in the cytoplasm. It localises to the nucleoid. This chain is Transcriptional regulator MraZ, found in Pseudomonas putida (strain ATCC 700007 / DSM 6899 / JCM 31910 / BCRC 17059 / LMG 24140 / F1).